The sequence spans 673 residues: MNGVEVPAKIQKRIERLREEINDHNYRYYVLSQPTIPDSVYDELFHELQKLEKKYPETITPSSPTQRVGAEPLKVFEPVHHEIPMLSLDNVFDEKGLRAFDKRIRQRLKLDKPFEYVCEPKMDGVALSLLYENGELIRAATRGDGYTGENVTQNTRTIASVPLQLRGNDYPELVEIRGEVLMPREGFAKFNREAEKRGDKTFANPRNAASGSLRQLDPRITAKRPLIFYGYLIGLLKGKDFPKNHCDVLKWFKDWGIPVISEIKVVGGIEGCLDYYEHLVKTREKMPFDIDGIVIKVNSLQVQAELGFVSRAPRWAIAYKFPAQEKMTVVKAIEFQVGRTGAVTPVARLEPVSVSGVTVSNATLHNFDELYRKDVRVGDTVIVRRAGDVIPEVVGPILAKRPKKAKLIKIPSRCPVCHAEVIKPEGEAVARCMGGLYCRAQLRESIKHFASRRALDIEGLGDKLVELFIQEKLIKDITGIYQLKKSAITALPRMGEKSAENLLTAIEKSKKTTLPRFLYALGIRGVGDTTARTLARHFHELDLLMKASIETLQEIRDIGPVVAENIHAFFHQKHNAELINKLIHLGVHWPQEKAVVKSEIAGKTFVLTGALKSLTREEAEEKIERSGGKATSSVSKNTDYVIVGENPGSKYEKAKALGISLIDEEAFLKLLKS.

NAD(+)-binding positions include 38–42 (DSVYD), 87–88 (SL), and glutamate 119. Catalysis depends on lysine 121, which acts as the N6-AMP-lysine intermediate. Residues arginine 142, glutamate 179, lysine 296, and lysine 320 each coordinate NAD(+). Cysteine 414, cysteine 417, cysteine 432, and cysteine 438 together coordinate Zn(2+). A BRCT domain is found at 595–673 (VVKSEIAGKT…EEAFLKLLKS (79 aa)).

This sequence belongs to the NAD-dependent DNA ligase family. LigA subfamily. Mg(2+) serves as cofactor. Requires Mn(2+) as cofactor.

It catalyses the reaction NAD(+) + (deoxyribonucleotide)n-3'-hydroxyl + 5'-phospho-(deoxyribonucleotide)m = (deoxyribonucleotide)n+m + AMP + beta-nicotinamide D-nucleotide.. Functionally, DNA ligase that catalyzes the formation of phosphodiester linkages between 5'-phosphoryl and 3'-hydroxyl groups in double-stranded DNA using NAD as a coenzyme and as the energy source for the reaction. It is essential for DNA replication and repair of damaged DNA. The sequence is that of DNA ligase from Coxiella burnetii (strain CbuK_Q154) (Coxiella burnetii (strain Q154)).